Reading from the N-terminus, the 280-residue chain is 4-deoxy-L-threo-5-hexosulose-uronate ketol-isomerase 1 (280 aa).

4 residues coordinate Zn(2+): His198, His200, Glu205, and His247.

It belongs to the KduI family. Zn(2+) is required as a cofactor.

It carries out the reaction 5-dehydro-4-deoxy-D-glucuronate = 3-deoxy-D-glycero-2,5-hexodiulosonate. Its pathway is glycan metabolism; pectin degradation; 2-dehydro-3-deoxy-D-gluconate from pectin: step 4/5. In terms of biological role, catalyzes the isomerization of 5-dehydro-4-deoxy-D-glucuronate to 3-deoxy-D-glycero-2,5-hexodiulosonate. The chain is 4-deoxy-L-threo-5-hexosulose-uronate ketol-isomerase 1 (kduI1) from Rhizobium meliloti (strain 1021) (Ensifer meliloti).